A 154-amino-acid chain; its full sequence is Transcriptional repressor NrdR (154 aa).

A zinc finger spans residues 3–34 (CPFCGAHDTKVIDSRLVAEGDQVRRRRECLAC). One can recognise an ATP-cone domain in the interval 49–139 (PRLIKQDGSR…VYRRFQDLNE (91 aa)).

Belongs to the NrdR family. Requires Zn(2+) as cofactor.

Its function is as follows. Negatively regulates transcription of bacterial ribonucleotide reductase nrd genes and operons by binding to NrdR-boxes. In Pseudomonas aeruginosa (strain LESB58), this protein is Transcriptional repressor NrdR.